We begin with the raw amino-acid sequence, 100 residues long: Phosphoribosyl-ATP pyrophosphatase (100 aa).

The protein belongs to the PRA-PH family.

The protein localises to the cytoplasm. It catalyses the reaction 1-(5-phospho-beta-D-ribosyl)-ATP + H2O = 1-(5-phospho-beta-D-ribosyl)-5'-AMP + diphosphate + H(+). Its pathway is amino-acid biosynthesis; L-histidine biosynthesis; L-histidine from 5-phospho-alpha-D-ribose 1-diphosphate: step 2/9. This chain is Phosphoribosyl-ATP pyrophosphatase, found in Haloquadratum walsbyi (strain DSM 16790 / HBSQ001).